The chain runs to 442 residues: Endothelin receptor type B (442 aa).

The first 26 residues, 1-26, serve as a signal peptide directing secretion; sequence MQSSASRCGRALVALLLACGLLGVWG. The Extracellular portion of the chain corresponds to 27 to 101; sequence EKRGFPPAQA…RKIEINKTFK (75 aa). Residues N60 and N97 are each glycosylated (N-linked (GlcNAc...) asparagine). Residues 102 to 126 form a helical membrane-spanning segment; the sequence is YINTIVSCLVFVLGIIGNSTLLRII. Residues 127–137 are Cytoplasmic-facing; sequence YKNKCMRNGPN. A helical transmembrane segment spans residues 138 to 163; the sequence is ILIASLALGDLLHIIIDIPINAYKLL. The Extracellular segment spans residues 164 to 175; the sequence is AGDWPFGAEMCK. C174 and C255 are oxidised to a cystine. Residues 176–197 traverse the membrane as a helical segment; sequence LVPFIQKASVGITVLSLCALSI. Topologically, residues 198–218 are cytoplasmic; sequence DRYRAVASWSRIKGIGVPKWT. Residues 219 to 243 traverse the membrane as a helical segment; the sequence is AVEIVLIWVVSVVLAVPEAIGFDVI. Residues 244–271 lie on the Extracellular side of the membrane; that stretch reads TSDYKGKPLRVCMLNPFQKTAFMQFYKT. The helical transmembrane segment at 272 to 296 threads the bilayer; the sequence is AKDWWLFSFYFCLPLAITAIFYTLM. Topologically, residues 297–324 are cytoplasmic; sequence TCEMLRKKSGMQIALNDHLKQRREVAKT. S305 carries the post-translational modification Phosphoserine. The chain crosses the membrane as a helical span at residues 325 to 350; that stretch reads VFCLVLVFALCWLPLHLSRILKLTLY. At 351–362 the chain is on the extracellular side; that stretch reads DQSNPQRCELLS. Residues 363–389 traverse the membrane as a helical segment; that stretch reads FLLVLDYIGINMASLNSCINPIALYLV. Residues 390-442 lie on the Cytoplasmic side of the membrane; the sequence is SKRFKNCFKSCLCCWCQTFEEKQSLEEKQSCLKFKANDHGYDNFRSSNKYSSS. 3 S-palmitoyl cysteine lipidation sites follow: C402, C403, and C405. S419 bears the Phosphoserine mark. Y439 is modified (phosphotyrosine). Phosphoserine is present on residues S440, S441, and S442.

Belongs to the G-protein coupled receptor 1 family. Endothelin receptor subfamily. EDNRB sub-subfamily. As to expression, widely distributed in cell types of a variety of tissues.

It localises to the cell membrane. Non-specific receptor for endothelin 1, 2, and 3. Mediates its action by association with G proteins that activate a phosphatidylinositol-calcium second messenger system. The sequence is that of Endothelin receptor type B from Rattus norvegicus (Rat).